The following is a 168-amino-acid chain: tRNA (cytidine(56)-2'-O)-methyltransferase (168 aa).

Residues Leu79 and Gly104–Val108 contribute to the S-adenosyl-L-methionine site.

This sequence belongs to the aTrm56 family. As to quaternary structure, homodimer.

It is found in the cytoplasm. It carries out the reaction cytidine(56) in tRNA + S-adenosyl-L-methionine = 2'-O-methylcytidine(56) in tRNA + S-adenosyl-L-homocysteine + H(+). Its function is as follows. Specifically catalyzes the AdoMet-dependent 2'-O-ribose methylation of cytidine at position 56 in tRNAs. This is tRNA (cytidine(56)-2'-O)-methyltransferase from Archaeoglobus fulgidus (strain ATCC 49558 / DSM 4304 / JCM 9628 / NBRC 100126 / VC-16).